A 208-amino-acid polypeptide reads, in one-letter code: Large ribosomal subunit protein uL3 (208 aa).

The tract at residues 124-146 (HGQSRGPMAHGSRYHRRPGSMGP) is disordered.

Belongs to the universal ribosomal protein uL3 family. As to quaternary structure, part of the 50S ribosomal subunit. Forms a cluster with proteins L14 and L19.

In terms of biological role, one of the primary rRNA binding proteins, it binds directly near the 3'-end of the 23S rRNA, where it nucleates assembly of the 50S subunit. This Streptococcus thermophilus (strain ATCC BAA-491 / LMD-9) protein is Large ribosomal subunit protein uL3.